The following is a 492-amino-acid chain: Protein adenylyltransferase Fic (492 aa).

Low complexity predominate over residues 1–17; it reads MCMEAEPPSPPAQQQEQ. The segment at 1–21 is disordered; that stretch reads MCMEAEPPSPPAQQQEQVNPP. The helical transmembrane segment at 33–55 threads the bilayer; sequence LYRLVLLFVAGSLAAWTFHALSS. TPR repeat units lie at residues 118-151 and 152-186; these read ALGALRMAQDLYLAGKDDKAARLFEHALALAPRH and PEVLLRYGEFLEHNQRNIVLADQYYFQALTISPSN. The Inhibitory (S/T)XXXE(G/N) motif motif lies at 243–248; sequence SVGIEG. ATP contacts are provided by residues glutamate 247 and 328–331; that span reads VGGH. Residues 297–432 enclose the Fido domain; sequence ITIKDILELH…IRPFVRFIAD (136 aa). Histidine 375 is an active-site residue. ATP is bound by residues 379 to 386, 411 to 412, and asparagine 419; these read DGNGRTSR and YY.

The protein belongs to the fic family. As to quaternary structure, homodimer.

It is found in the membrane. The enzyme catalyses L-tyrosyl-[protein] + ATP = O-(5'-adenylyl)-L-tyrosyl-[protein] + diphosphate. The catalysed reaction is L-threonyl-[protein] + ATP = 3-O-(5'-adenylyl)-L-threonyl-[protein] + diphosphate. It carries out the reaction 3-O-(5'-adenylyl)-L-threonyl-[protein] + H2O = L-threonyl-[protein] + AMP + H(+). The side chain of Glu-247 determines which of the two opposing activities (AMPylase or de-AMPylase) will take place. In response to endoplasmic reticulum stress, mediates de-AMPylase activity. Adenylyltransferase activity is inhibited by the inhibitory helix present at the N-terminus: Glu-247 binds ATP and competes with ATP-binding at Arg-386, thereby preventing adenylyltransferase activity. In unstressed cells, disengagement of Glu-247 promotes adenylyltransferase activity. Activation dissociates ATP-binding from Glu-247, allowing ordered binding of the entire ATP moiety with the alpha-phosphate in an orientation that is productive for accepting an incoming target hydroxyl side chain. In terms of biological role, protein that can both mediate the addition of adenosine 5'-monophosphate (AMP) to specific residues of target proteins (AMPylation), and the removal of the same modification from target proteins (de-AMPylation), depending on the context. The side chain of Glu-247 determines which of the two opposing activities (AMPylase or de-AMPylase) will take place. Acts as a key regulator of the unfolded protein response (UPR) by mediating AMPylation or de-AMPylation of Hsc70-3/BiP. In unstressed cells, acts as an adenylyltransferase by mediating AMPylation of Hsc70-3/BiP at 'Thr-518', thereby inactivating it. In response to endoplasmic reticulum stress, acts as a phosphodiesterase by mediating removal of ATP (de-AMPylation) from Hsc70-3/BiP at 'Thr-518', leading to restore HSPA5/BiP activity. The protein is Protein adenylyltransferase Fic of Drosophila simulans (Fruit fly).